The following is a 98-amino-acid chain: TTCTSTQQTAAYVTLVSILSDSSFNQCATDSGYSMLTATALPTTAQYKLMCASTACNTMINKIVTLNPPDCELTVPTSGLVLNVYSYANGFSATCASL.

3 disulfides stabilise this stretch: Cys3–Cys71, Cys27–Cys56, and Cys51–Cys95.

This sequence belongs to the elicitin family.

Its subcellular location is the secreted. Functionally, induces local and distal defense responses (incompatible hypersensitive reaction) in plants from the solanaceae and cruciferae families. Elicits leaf necrosis and causes the accumulation of pathogenesis-related proteins. Might interact with the lipidic molecules of the plasma membrane. The sequence is that of Alpha-elicitin MGM-alpha from Phytophthora megasperma (Potato pink rot fungus).